The chain runs to 454 residues: Bifunctional protein GlmU (454 aa).

The segment at 1–228 is pyrophosphorylase; the sequence is MTLPLHVVIL…PQDVEGANDP (228 aa). UDP-N-acetyl-alpha-D-glucosamine-binding positions include 10–13, K24, Q76, 81–82, 103–105, G138, E153, N168, and N226; these read LAAG, GT, and YGD. D105 provides a ligand contact to Mg(2+). Residue N226 coordinates Mg(2+). The interval 229 to 249 is linker; it reads WQLAQLERAWQLRAARALCLQ. Residues 250–454 form an N-acetyltransferase region; it reads GVRMADPARV…IEGWERPKKK (205 aa). 2 residues coordinate UDP-N-acetyl-alpha-D-glucosamine: R332 and K350. The active-site Proton acceptor is H362. Positions 365 and 376 each coordinate UDP-N-acetyl-alpha-D-glucosamine. Acetyl-CoA contacts are provided by residues A379, 385–386, S404, A422, and R439; that span reads NY.

The protein in the N-terminal section; belongs to the N-acetylglucosamine-1-phosphate uridyltransferase family. This sequence in the C-terminal section; belongs to the transferase hexapeptide repeat family. Homotrimer. The cofactor is Mg(2+).

The protein resides in the cytoplasm. It catalyses the reaction alpha-D-glucosamine 1-phosphate + acetyl-CoA = N-acetyl-alpha-D-glucosamine 1-phosphate + CoA + H(+). It carries out the reaction N-acetyl-alpha-D-glucosamine 1-phosphate + UTP + H(+) = UDP-N-acetyl-alpha-D-glucosamine + diphosphate. It participates in nucleotide-sugar biosynthesis; UDP-N-acetyl-alpha-D-glucosamine biosynthesis; N-acetyl-alpha-D-glucosamine 1-phosphate from alpha-D-glucosamine 6-phosphate (route II): step 2/2. Its pathway is nucleotide-sugar biosynthesis; UDP-N-acetyl-alpha-D-glucosamine biosynthesis; UDP-N-acetyl-alpha-D-glucosamine from N-acetyl-alpha-D-glucosamine 1-phosphate: step 1/1. The protein operates within bacterial outer membrane biogenesis; LPS lipid A biosynthesis. Functionally, catalyzes the last two sequential reactions in the de novo biosynthetic pathway for UDP-N-acetylglucosamine (UDP-GlcNAc). The C-terminal domain catalyzes the transfer of acetyl group from acetyl coenzyme A to glucosamine-1-phosphate (GlcN-1-P) to produce N-acetylglucosamine-1-phosphate (GlcNAc-1-P), which is converted into UDP-GlcNAc by the transfer of uridine 5-monophosphate (from uridine 5-triphosphate), a reaction catalyzed by the N-terminal domain. The sequence is that of Bifunctional protein GlmU from Xanthomonas campestris pv. campestris (strain 8004).